The chain runs to 987 residues: UPF0182 protein DIP0733 (987 aa).

7 helical membrane-spanning segments follow: residues 19–39 (LTWLIPLLMILGALVPTVVDL), 63–83 (IGLFVGFGLLAGIVTFLAGWF), 115–135 (FLVVLPVVIGIAAGFLGQQAW), 176–196 (SVLLVVAFLIALVGHYLLGGI), 212–234 (YAKVQLAVTGGLYLLVRMASYWL), 261–281 (AKIVLLVISAVVAISFFSVIV), and 290–310 (ISTVLMIVSSLAIGNAWPIMM). The segment covering 904–927 (DLGEAKGLKPESQNRDKPEDKEGK) has biased composition (basic and acidic residues). Residues 904-950 (DLGEAKGLKPESQNRDKPEDKEGKAPSTPSAPASGSGTTGEAIGKIN) form a disordered region. Low complexity predominate over residues 928 to 943 (APSTPSAPASGSGTTG).

Belongs to the UPF0182 family.

It is found in the cell membrane. The protein is UPF0182 protein DIP0733 of Corynebacterium diphtheriae (strain ATCC 700971 / NCTC 13129 / Biotype gravis).